The sequence spans 364 residues: Lipid-A-disaccharide synthase (364 aa).

This sequence belongs to the LpxB family.

The enzyme catalyses a lipid X + a UDP-2-N,3-O-bis[(3R)-3-hydroxyacyl]-alpha-D-glucosamine = a lipid A disaccharide + UDP + H(+). The protein operates within bacterial outer membrane biogenesis; LPS lipid A biosynthesis. In terms of biological role, condensation of UDP-2,3-diacylglucosamine and 2,3-diacylglucosamine-1-phosphate to form lipid A disaccharide, a precursor of lipid A, a phosphorylated glycolipid that anchors the lipopolysaccharide to the outer membrane of the cell. This is Lipid-A-disaccharide synthase from Campylobacter jejuni (strain RM1221).